A 666-amino-acid polypeptide reads, in one-letter code: Protein-arginine deiminase type-4 (666 aa).

Asparagine 153, aspartate 155, aspartate 165, aspartate 168, aspartate 176, and aspartate 179 together coordinate Ca(2+). 2 positions are modified to citrulline: arginine 212 and arginine 218. Glutamine 349 lines the Ca(2+) pocket. The active site involves aspartate 350. The Ca(2+) site is built by glutamate 351, glutamate 353, aspartate 369, and serine 370. A citrulline mark is found at arginine 372, arginine 374, and arginine 383. Arginine 374 serves as a coordination point for substrate. Ca(2+) contacts are provided by phenylalanine 407, leucine 410, and glutamate 411. Residues histidine 471, aspartate 473, and cysteine 648 contribute to the active site.

It belongs to the protein arginine deiminase family. Ca(2+) is required as a cofactor. Autocitrullination at Arg-372 and Arg-374 inactivates the enzyme. In terms of tissue distribution, epidermis.

The protein localises to the cytoplasm. It is found in the nucleus. The protein resides in the cytoplasmic granule. It carries out the reaction L-arginyl-[protein] + H2O = L-citrullyl-[protein] + NH4(+). In terms of biological role, catalyzes the citrullination/deimination of arginine residues of proteins such as histones, thereby playing a key role in histone code and regulation of stem cell maintenance. Citrullinates histone H1 at 'Arg-54' (to form H1R54ci), histone H3 at 'Arg-2', 'Arg-8', 'Arg-17' and/or 'Arg-26' (to form H3R2ci, H3R8ci, H3R17ci, H3R26ci, respectively) and histone H4 at 'Arg-3' (to form H4R3ci). Acts as a key regulator of stem cell maintenance by mediating citrullination of histone H1: citrullination of 'Arg-54' of histone H1 (H1R54ci) results in H1 displacement from chromatin and global chromatin decondensation, thereby promoting pluripotency and stem cell maintenance. Promotes profound chromatin decondensation during the innate immune response to infection in neutrophils by mediating formation of H1R54ci. Required for the formation of neutrophil extracellular traps (NETs); NETs are mainly composed of DNA fibers and are released by neutrophils to bind pathogens during inflammation. Citrullination of histone H3 prevents their methylation by CARM1 and HRMT1L2/PRMT1 and represses transcription. Citrullinates EP300/P300 at 'Arg-2142', which favors its interaction with NCOA2/GRIP1. The protein is Protein-arginine deiminase type-4 (Padi4) of Rattus norvegicus (Rat).